Consider the following 382-residue polypeptide: Histidinol-phosphate aminotransferase (382 aa).

An N6-(pyridoxal phosphate)lysine modification is found at Lys215. The segment at 363 to 382 is disordered; it reads NIDNQSKTHSQTSSIRKGTI.

It belongs to the class-II pyridoxal-phosphate-dependent aminotransferase family. Histidinol-phosphate aminotransferase subfamily. Homodimer. Pyridoxal 5'-phosphate serves as cofactor.

It carries out the reaction L-histidinol phosphate + 2-oxoglutarate = 3-(imidazol-4-yl)-2-oxopropyl phosphate + L-glutamate. It participates in amino-acid biosynthesis; L-histidine biosynthesis; L-histidine from 5-phospho-alpha-D-ribose 1-diphosphate: step 7/9. The protein is Histidinol-phosphate aminotransferase of Yersinia pseudotuberculosis serotype O:1b (strain IP 31758).